Here is a 305-residue protein sequence, read N- to C-terminus: Orotidine 5'-phosphate decarboxylase (305 aa).

Catalysis depends on Lys108, which acts as the Proton donor.

Belongs to the OMP decarboxylase family. Type 2 subfamily.

It catalyses the reaction orotidine 5'-phosphate + H(+) = UMP + CO2. It participates in pyrimidine metabolism; UMP biosynthesis via de novo pathway; UMP from orotate: step 2/2. This is Orotidine 5'-phosphate decarboxylase from Caldicellulosiruptor saccharolyticus (strain ATCC 43494 / DSM 8903 / Tp8T 6331).